Reading from the N-terminus, the 364-residue chain is Fructose-bisphosphate aldolase B (364 aa).

Residue Ala-2 is modified to N-acetylalanine. Lys-13 is modified (N6-succinyllysine). At Ser-36 the chain carries Phosphoserine. At Thr-39 the chain carries Phosphothreonine. Arg-43 contributes to the beta-D-fructose 1,6-bisphosphate binding site. Ser-89 is modified (phosphoserine). Residue Thr-119 is modified to Phosphothreonine. Lys-121 carries the post-translational modification N6-succinyllysine. A Phosphoserine modification is found at Ser-132. Glu-188 (proton acceptor) is an active-site residue. Lys-230 acts as the Schiff-base intermediate with dihydroxyacetone-P in catalysis. Phosphoserine is present on residues Ser-272, Ser-276, Ser-299, and Ser-301. 272 to 274 contributes to the beta-D-fructose 1,6-bisphosphate binding site; that stretch reads SGG. Arg-304 is a beta-D-fructose 1,6-bisphosphate binding site. At Ser-309 the chain carries Phosphoserine. Lys-317 carries the N6-succinyllysine modification.

The protein belongs to the class I fructose-bisphosphate aldolase family. As to quaternary structure, homotetramer. Interacts with BBS1, BBS2, BBS4 and BBS7. Forms a ternary complex with G6PD and TP53; this interaction is direct.

The protein localises to the cytoplasm. It localises to the cytosol. It is found in the cytoskeleton. The protein resides in the microtubule organizing center. Its subcellular location is the centrosome. The protein localises to the centriolar satellite. It catalyses the reaction beta-D-fructose 1,6-bisphosphate = D-glyceraldehyde 3-phosphate + dihydroxyacetone phosphate. It carries out the reaction beta-D-fructose 1-phosphate = D-glyceraldehyde + dihydroxyacetone phosphate. It functions in the pathway carbohydrate degradation; glycolysis; D-glyceraldehyde 3-phosphate and glycerone phosphate from D-glucose: step 4/4. The protein operates within carbohydrate biosynthesis; gluconeogenesis. Its pathway is carbohydrate metabolism; fructose metabolism. Functionally, catalyzes the aldol cleavage of fructose 1,6-biphosphate to form two triosephosphates dihydroxyacetone phosphate and D-glyceraldehyde 3-phosphate in glycolysis as well as the reverse stereospecific aldol addition reaction in gluconeogenesis. In fructolysis, metabolizes fructose 1-phosphate derived from the phosphorylation of dietary fructose by fructokinase into dihydroxyacetone phosphate and D-glyceraldehyde. Acts as an adapter independently of its enzymatic activity, exerts a tumor suppressor role by stabilizing the ternary complex with G6PD and TP53 to inhibit G6PD activity and keep oxidative pentose phosphate metabolism in check. The chain is Fructose-bisphosphate aldolase B (Aldob) from Rattus norvegicus (Rat).